The primary structure comprises 583 residues: Bifunctional lycopene cyclase/phytoene synthase (583 aa).

A lycopene beta-cyclase region spans residues Met1–Asn243. 7 helical membrane-spanning segments follow: residues Phe3–Leu23, Lys35–Ile55, Ile75–Leu97, Tyr120–Ile140, Leu151–Ile171, Ala173–Val193, and Ile221–Phe241. Residues Thr250–Lys583 are phytoene synthase.

This sequence in the N-terminal section; belongs to the lycopene beta-cyclase family. In the C-terminal section; belongs to the phytoene/squalene synthase family.

The protein localises to the membrane. It catalyses the reaction all-trans-lycopene = gamma-carotene. The catalysed reaction is gamma-carotene = all-trans-beta-carotene. It carries out the reaction 2 (2E,6E,10E)-geranylgeranyl diphosphate = 15-cis-phytoene + 2 diphosphate. It participates in carotenoid biosynthesis; beta-carotene biosynthesis. The protein operates within carotenoid biosynthesis; phytoene biosynthesis; all-trans-phytoene from geranylgeranyl diphosphate: step 1/1. Bifunctional enzyme that catalyzes the reactions from geranylgeranyl diphosphate to phytoene (phytoene synthase) and lycopene to beta-carotene via the intermediate gamma-carotene (lycopene cyclase). This chain is Bifunctional lycopene cyclase/phytoene synthase, found in Pyrenophora tritici-repentis (strain Pt-1C-BFP) (Wheat tan spot fungus).